A 267-amino-acid polypeptide reads, in one-letter code: C-type lectin domain family 12 member A (267 aa).

Topologically, residues Met1 to Val43 are cytoplasmic. An ITIM motif motif is present at residues Ile5–Leu10. Tyr7 carries the phosphotyrosine modification. Residues Leu44–Phe64 traverse the membrane as a helical; Signal-anchor for type II membrane protein segment. At Tyr65 to Arg267 the chain is on the extracellular side. Asn98 and Asn105 each carry an N-linked (GlcNAc...) asparagine glycan. Cystine bridges form between Cys118/Cys130, Cys133/Cys144, Cys161/Cys246, and Cys225/Cys238. A C-type lectin domain is found at Tyr140 to Glu247. An N-linked (GlcNAc...) asparagine glycan is attached at Asn165.

As to quaternary structure, homodimer; disulfide-linked. Interacts (when the ITIM motif is phosphorylated) with PTPN6 and PTPN11. Post-translationally, phosphorylated at Tyr-7 by SRC in the ITIM motif following ligand-binding, promoting recruitment of tyrosine-protein phosphatases PTPN6 and PTPN11. In terms of tissue distribution, mainly expressed in lymphoid tissues. Preferentially expressed in peripheral blood leukocytes; less frequent in thymus, spleen, heart, brain and lung; and undetectable in other tissues.

The protein localises to the cell membrane. Its function is as follows. Myeloid inhibitory C-type lectin receptor that acts as a negative regulator of myeloid cell activation. Myeloid cell inhibition is required to limit proinflammatory pathways and protect against excessive inflammation. Specifically recognizes and binds various structures, such as neutrophil extracellular traps (NETs) or monosodium urate crystals. Also acts as a pattern-recognition receptor for pathogen-associated molecules, such as plasmodium hemozoin or mycobacterial micolic acid. Ligand-binding induces phosphorylation of its ITIM motif, followed by recruitment of tyrosine-protein phosphatases PTPN6 and PTPN11, which counteract tyrosine-protein kinase SYK, thereby preventing myeloid cell activation. Acts as a pattern-recognition receptor for NETs in neutrophils: specifically recognizes DNA in NETs, leading to inhibit neutrophil activation and limit further NET formation. This regulation is essential for controlling key neutrophil responses and limit NET-mediated inflammatory conditions. Also recognizes dead cells by acting as a receptor for monosodium urate crystals, leading to down-regulate neutrophil activation. Binding to monosodium urate crystals also promotes the type I interferon response. Acts as an inhibitor of natural killer (NK) cell cytotoxicity. Also acts as an ihibitor of dendritic cell maturation in an IL10-dependent manner. This is C-type lectin domain family 12 member A from Mus musculus (Mouse).